A 1463-amino-acid chain; its full sequence is Nitric oxide synthase 1 (1463 aa).

The interaction with NOSIP stretch occupies residues 1 to 200 (MESHMFSVQQ…LQGSGENNKL (200 aa)). The 83-residue stretch at 17–99 (SVRLFKRKVG…ETHVVLILRG (83 aa)) folds into the PDZ domain. Disordered regions lie at residues 110 to 194 (TFTG…LQGS), 215 to 250 (GKAI…LPLG), and 268 to 298 (VVLN…SKCP). A DYNLL1/PIN/nNOS-inhibiting protein-binding region spans residues 158-240 (PDPGQEASSL…VEVQVDRDPD (83 aa)). Over residues 226–243 (TETKDVEVQVDRDPDSKS) the composition is skewed to basic and acidic residues. Polar residues predominate over residues 280–294 (PSASGKQSPTKNGSP). Position 334 (serine 334) interacts with (6R)-L-erythro-5,6,7,8-tetrahydrobiopterin. Cysteine 415 is a heme b binding site. 4 residues coordinate L-arginine: glutamine 478, tryptophan 587, tyrosine 588, and glutamate 592. 3 residues coordinate (6R)-L-erythro-5,6,7,8-tetrahydrobiopterin: valine 677, tryptophan 678, and phenylalanine 691. Tyrosine 706 contacts heme b. Residues 725–745 (KRRAIGFKKLAEAVKFSAKLM) are calmodulin-binding. The region spanning 755 to 969 (ATILYATETG…AFRTWAKKVF (215 aa)) is the Flavodoxin-like domain. The FMN site is built by threonine 761, glutamate 762, threonine 763, lysine 765, serine 766, serine 807, threonine 808, and glycine 812. Residues serine 881, serine 891, and serine 892 each carry the phosphoserine modification. FMN is bound by residues serine 920, histidine 925, cysteine 927, glutamate 953, and glutamine 957. Positions 1024-1271 (KRVSAARLLS…VRGAPSFHLP (248 aa)) constitute an FAD-binding FR-type domain. Arginine 1044 serves as a coordination point for NADP(+). Residues histidine 1066, arginine 1207, tyrosine 1208, tyrosine 1209, serine 1210, threonine 1225, and alanine 1227 each coordinate FAD. Serine 1230 lines the NADP(+) pocket. Tyrosine 1231, valine 1244, cysteine 1245, and serine 1246 together coordinate FAD. Residues threonine 1285, arginine 1318, serine 1347, arginine 1348, lysine 1354, tyrosine 1356, glutamine 1358, aspartate 1391, threonine 1432, and arginine 1434 each coordinate NADP(+).

It belongs to the NOS family. Homodimer. Interacts with DLG4; the interaction possibly being prevented by the association between NOS1 and CAPON. Forms a ternary complex with CAPON and RASD1. Forms a ternary complex with CAPON and SYN1. Interacts with ZDHHC23. Interacts with NOSIP; which may impair its synaptic location. Interacts with HTR4. Interacts with SLC6A4. Interacts with VAC14. Interacts (via N-terminal domain) with DLG4 (via N-terminal tandem pair of PDZ domains). Interacts with SLC6A4. Forms a complex with ASL, ASS1 and SLC7A1; the complex regulates cell-autonomous L-arginine synthesis and citrulline recycling while channeling extracellular L-arginine to nitric oxide synthesis pathway. Interacts with DMD; localizes NOS1 to sarcolemma in muscle cells. Interacts with DYNLL1; inhibits the nitric oxide synthase activity. Requires heme b as cofactor. FAD serves as cofactor. FMN is required as a cofactor. It depends on (6R)-L-erythro-5,6,7,8-tetrahydrobiopterin as a cofactor. In terms of processing, ubiquitinated; mediated by STUB1/CHIP in the presence of Hsp70 and Hsp40 (in vitro).

The protein resides in the cell membrane. Its subcellular location is the sarcolemma. It is found in the cell projection. It localises to the dendritic spine. The enzyme catalyses 2 L-arginine + 3 NADPH + 4 O2 + H(+) = 2 L-citrulline + 2 nitric oxide + 3 NADP(+) + 4 H2O. Stimulated by calcium/calmodulin. Inhibited by DYNLL1 that prevents the dimerization of the protein. Inhibited by NOSIP. Produces nitric oxide (NO) which is a messenger molecule with diverse functions throughout the body. In the brain and peripheral nervous system, NO displays many properties of a neurotransmitter. Probably has nitrosylase activity and mediates cysteine S-nitrosylation of cytoplasmic target proteins such SRR. In Ovis aries (Sheep), this protein is Nitric oxide synthase 1 (NOS1).